The primary structure comprises 200 residues: Pyridoxal 5'-phosphate synthase subunit PdxT (200 aa).

46–48 (GES) serves as a coordination point for L-glutamine. Catalysis depends on C78, which acts as the Nucleophile. Residues R107 and 138-139 (IR) contribute to the L-glutamine site. Catalysis depends on charge relay system residues H175 and E177.

It belongs to the glutaminase PdxT/SNO family. In the presence of PdxS, forms a dodecamer of heterodimers. Only shows activity in the heterodimer.

It catalyses the reaction aldehydo-D-ribose 5-phosphate + D-glyceraldehyde 3-phosphate + L-glutamine = pyridoxal 5'-phosphate + L-glutamate + phosphate + 3 H2O + H(+). It carries out the reaction L-glutamine + H2O = L-glutamate + NH4(+). The protein operates within cofactor biosynthesis; pyridoxal 5'-phosphate biosynthesis. Functionally, catalyzes the hydrolysis of glutamine to glutamate and ammonia as part of the biosynthesis of pyridoxal 5'-phosphate. The resulting ammonia molecule is channeled to the active site of PdxS. This chain is Pyridoxal 5'-phosphate synthase subunit PdxT, found in Corynebacterium glutamicum (strain R).